The chain runs to 428 residues: Tol-Pal system protein TolB (428 aa).

The signal sequence occupies residues 1 to 23 (MRRLYQTVCTLALLLVGLQAAHA).

This sequence belongs to the TolB family. In terms of assembly, the Tol-Pal system is composed of five core proteins: the inner membrane proteins TolA, TolQ and TolR, the periplasmic protein TolB and the outer membrane protein Pal. They form a network linking the inner and outer membranes and the peptidoglycan layer.

Its subcellular location is the periplasm. Its function is as follows. Part of the Tol-Pal system, which plays a role in outer membrane invagination during cell division and is important for maintaining outer membrane integrity. The sequence is that of Tol-Pal system protein TolB from Alkalilimnicola ehrlichii (strain ATCC BAA-1101 / DSM 17681 / MLHE-1).